A 322-amino-acid polypeptide reads, in one-letter code: Ferredoxin--NADP reductase (322 aa).

FAD is bound by residues Leu87, Phe119, Asp279, and Thr320.

Belongs to the ferredoxin--NADP reductase type 2 family. Homodimer. FAD serves as cofactor.

It carries out the reaction 2 reduced [2Fe-2S]-[ferredoxin] + NADP(+) + H(+) = 2 oxidized [2Fe-2S]-[ferredoxin] + NADPH. The protein is Ferredoxin--NADP reductase of Streptococcus suis (strain 98HAH33).